Reading from the N-terminus, the 948-residue chain is FRIGIDA-like protein 5 (948 aa).

Positions 47–164 form a coiled coil; the sequence is DSTRSVLEER…VEKHRERIVA (118 aa). Disordered regions lie at residues 447 to 500, 518 to 538, and 804 to 894; these read ESAQ…APSQ, VKESGADHQPDTIATHPSGTE, and RNTS…YPSH. Composition is skewed to basic and acidic residues over residues 459 to 475 and 518 to 527; these read SYEKRQSTTKGVEKSEA and VKESGADHQP. The span at 807–817 shows a compositional bias: low complexity; the sequence is SNGSGSGSASS. Polar residues predominate over residues 818–830; sequence KPDSTIKQSQTAK. Over residues 861–872 the composition is skewed to basic residues; sequence FSKKNKRGKKRS. The segment covering 873 to 894 has biased composition (polar residues); sequence MSGNNQSSGHIASHTSNHYPSH.

The protein belongs to the Frigida family. Expressed at low levels during seed development.

In Arabidopsis thaliana (Mouse-ear cress), this protein is FRIGIDA-like protein 5 (FRL5).